Consider the following 486-residue polypeptide: ATP synthase subunit beta, chloroplastic (486 aa).

154-161 (GGAGVGKT) contacts ATP.

It belongs to the ATPase alpha/beta chains family. F-type ATPases have 2 components, CF(1) - the catalytic core - and CF(0) - the membrane proton channel. CF(1) has five subunits: alpha(3), beta(3), gamma(1), delta(1), epsilon(1). CF(0) has four main subunits: a(1), b(1), b'(1) and c(9-12).

Its subcellular location is the plastid. The protein localises to the chloroplast thylakoid membrane. It catalyses the reaction ATP + H2O + 4 H(+)(in) = ADP + phosphate + 5 H(+)(out). Produces ATP from ADP in the presence of a proton gradient across the membrane. The catalytic sites are hosted primarily by the beta subunits. The polypeptide is ATP synthase subunit beta, chloroplastic (Dennstaedtia punctilobula (Hay-scented fern)).